A 26-amino-acid chain; its full sequence is Phospholipase A2 homolog A1 (26 aa).

Post-translationally, contains 7 disulfide bonds. In terms of tissue distribution, expressed by the venom gland.

It localises to the secreted. The sequence is that of Phospholipase A2 homolog A1 from Micrurus pyrrhocryptus (Coral snake).